A 350-amino-acid chain; its full sequence is Pro-cathepsin H (350 aa).

A signal peptide spans 1–19 (MAQWTLLIVFFCVATAAAG). A propeptide spans 20 to 113 (LSFHDSNPIR…WEEFRSHRLG (94 aa)) (activation peptide). Residue N117 is glycosylated (N-linked (GlcNAc...) asparagine). Positions 122–132 (LKGNHRITDVV) are cleaved as a propeptide — removed in mature form. 2 disulfide bridges follow: C154–C197 and C188–C230. C157 is an active-site residue. A glycan (N-linked (GlcNAc...) asparagine) is linked at N177. N-linked (GlcNAc...) asparagine glycosylation is present at N246. C288 and C338 are disulfide-bonded. Catalysis depends on residues H297 and N317.

It belongs to the peptidase C1 family. In terms of assembly, interacts with KPI104 and KPI106. Composed of a mini chain and a large chain. The large chain may be split into heavy and light chain. All chains are held together by disulfide bonds.

The protein resides in the vacuole. It is found in the lysosome. The enzyme catalyses Hydrolysis of proteins, acting as an aminopeptidase (notably, cleaving Arg-|-Xaa bonds) as well as an endopeptidase.. Functionally, may play a role in proteolysis leading to mobilization of nitrogen during senescence and starvation. In Medicago truncatula (Barrel medic), this protein is Pro-cathepsin H.